We begin with the raw amino-acid sequence, 347 residues long: Intracellular hyaluronan-binding protein 4 (347 aa).

Disordered stretches follow at residues 39-221 (GTEK…PSET) and 298-347 (FGSL…PALA). Basic and acidic residues-rich tracts occupy residues 61–71 (VKKESQRDRKT), 83–107 (PGHE…DAEK), 116–125 (RPVDVLDRPA), and 146–174 (DGFD…EKRS). A compositionally biased stretch (acidic residues) spans 199 to 213 (EVTENEETQEAVETD). Positions 307-319 (GGRGGRGGRGRGG) are enriched in gly residues. A compositionally biased stretch (acidic residues) spans 338-347 (DDPEDFPALA).

Belongs to the SERBP1-HABP4 family. In terms of assembly, associates with ribosomes; promoting ribosome stabilization. Interacts with eef2/eEF2; promoting ribosome stabilization.

It localises to the nucleus. The protein localises to the cytoplasm. The protein resides in the stress granule. It is found in the nucleolus. Its subcellular location is the nucleus speckle. It localises to the cajal body. In terms of biological role, ribosome-binding protein that promotes ribosome hibernation, a process during which ribosomes are stabilized in an inactive state and preserved from proteasomal degradation. Acts via its association with eef2/eEF2 factor at the A-site of the ribosome, promoting ribosome stabilization in an inactive state compatible with storage. Plays a key role in ribosome hibernation in the mature egg by promoting ribosome stabilization. Ribosomes, which are produced in large quantities during oogenesis, are stored and translationally repressed in the egg and early embryo. This Danio rerio (Zebrafish) protein is Intracellular hyaluronan-binding protein 4.